The chain runs to 1144 residues: Guanine nucleotide-binding protein G(s) subunit alpha isoforms XLas (1144 aa).

Disordered regions lie at residues 1–186 (MGML…LAPG), 316–558 (DDDT…PAAG), 622–657 (SASA…SAWP), and 735–772 (RSRS…DKKR). Low complexity predominate over residues 31–46 (LEAQGAAAPGAGVGPA). Over residues 343–356 (KSEHAKRPPLERQA) the composition is skewed to basic and acidic residues. Polar residues predominate over residues 358–369 (ETGNSPISSTTA). Basic and acidic residues predominate over residues 370–381 (EEAKVPSLERGE). 2 stretches are compositionally biased toward low complexity: residues 467–499 (PAAA…AAEA) and 518–558 (EPAA…PAAG). Over residues 644–654 (PPTPRPAPRPS) the composition is skewed to pro residues. Basic and acidic residues predominate over residues 743 to 767 (KAKDPMEERRKQMRKEAMEMREQKR). The stretch at 745–772 (KDPMEERRKQMRKEAMEMREQKRADKKR) forms a coiled coil. The 356-residue stretch at 789 to 1144 (CTHRLLLLGA…RMHLRQYELL (356 aa)) folds into the G-alpha domain. The tract at residues 792–805 (RLLLLGAGESGKST) is G1 motif. 797 to 805 (GAGESGKST) contacts GTP. Serine 804 contributes to the Mg(2+) binding site. The segment at 818 to 840 (FNGEGGEEDPQAARSNSDGEKAT) is disordered. Positions 837–863 (EKATKVQDIKNNLKEAIETIVAAMSNL) form a coiled coil. The interval 946–954 (DLPRCRVLT) is G2 motif. Residues 947–954 (LPRCRVLT), 973–977 (DVGGQ), and 1042–1045 (NKQD) each bind GTP. Arginine 951 is subject to ADP-ribosylarginine; by cholera toxin. Threonine 954 is a Mg(2+) binding site. The G3 motif stretch occupies residues 969–978 (FHMFDVGGQR). The G4 motif stretch occupies residues 1038 to 1045 (ILFLNKQD). Serine 1102 is modified (phosphoserine). Residues 1114–1119 (TCAVDT) form a G5 motif region. GTP is bound at residue alanine 1116.

Belongs to the G-alpha family. G(s) subfamily. As to quaternary structure, g proteins are composed of 3 units; alpha, beta and gamma. The alpha chain contains the guanine nucleotide binding site. Interacts through its N-terminal region with ALEX which is produced from the same locus in a different open reading frame. This interaction may inhibit its adenylyl cyclase-stimulating activity. Interacts with MAGED2. In terms of tissue distribution, enriched in neuroendocrine tissues with a particularly high level of expression in pituitary where it is abundant in intermediate and anterior lobes. In adrenal gland, found in central region containing medullary chromaffin cells but not in cortex. In cerebellum, strongly expressed in perikarya of Purkinje cells. Not detected in liver, kidney or neurohypophysis.

It is found in the cell membrane. The protein resides in the apical cell membrane. Guanine nucleotide-binding proteins (G proteins) function as transducers in numerous signaling pathways controlled by G protein-coupled receptors (GPCRs). Signaling involves the activation of adenylyl cyclases, resulting in increased levels of the signaling molecule cAMP. GNAS functions downstream of several GPCRs, including beta-adrenergic receptors. XLas isoforms interact with the same set of receptors as Gnas isoforms. In Rattus norvegicus (Rat), this protein is Guanine nucleotide-binding protein G(s) subunit alpha isoforms XLas.